An 810-amino-acid chain; its full sequence is Glycerol-3-phosphate acyltransferase (810 aa).

Residues C305–I310 carry the HXXXXD motif motif.

Belongs to the GPAT/DAPAT family.

The protein resides in the cell inner membrane. The catalysed reaction is sn-glycerol 3-phosphate + an acyl-CoA = a 1-acyl-sn-glycero-3-phosphate + CoA. It functions in the pathway phospholipid metabolism; CDP-diacylglycerol biosynthesis; CDP-diacylglycerol from sn-glycerol 3-phosphate: step 1/3. This Haemophilus influenzae (strain 86-028NP) protein is Glycerol-3-phosphate acyltransferase.